The chain runs to 473 residues: Inactive pancreatic lipase-related protein 1 (473 aa).

An N-terminal signal peptide occupies residues 1-17 (MLILWTIPLFLLGAAQG). Intrachain disulfides connect cysteine 21-cysteine 27 and cysteine 109-cysteine 120. Serine 171 acts as the Nucleophile in catalysis. Residue aspartate 194 is the Charge relay system of the active site. Ca(2+) contacts are provided by glutamate 205, arginine 208, aspartate 210, and aspartate 213. A disulfide bond links cysteine 255 and cysteine 279. Catalysis depends on histidine 281, which acts as the Charge relay system. 3 cysteine pairs are disulfide-bonded: cysteine 303–cysteine 314, cysteine 317–cysteine 322, and cysteine 451–cysteine 467. In terms of domain architecture, PLAT spans 356 to 467 (WRYRVSLTFS…EDILLTLLPC (112 aa)).

The protein belongs to the AB hydrolase superfamily. Lipase family. Expressed in female, but not in male, lacrimal gland. Expressed in male and female sublingual gland and pancreas.

It localises to the secreted. May function as inhibitor of dietary triglyceride digestion. Lacks detectable lipase activity (in vitro). The sequence is that of Inactive pancreatic lipase-related protein 1 (Pnliprp1) from Mus musculus (Mouse).